Here is a 266-residue protein sequence, read N- to C-terminus: Imidazole glycerol phosphate synthase subunit HisF (266 aa).

Active-site residues include Asp11 and Asp130.

It belongs to the HisA/HisF family. In terms of assembly, heterodimer of HisH and HisF.

The protein localises to the cytoplasm. The enzyme catalyses 5-[(5-phospho-1-deoxy-D-ribulos-1-ylimino)methylamino]-1-(5-phospho-beta-D-ribosyl)imidazole-4-carboxamide + L-glutamine = D-erythro-1-(imidazol-4-yl)glycerol 3-phosphate + 5-amino-1-(5-phospho-beta-D-ribosyl)imidazole-4-carboxamide + L-glutamate + H(+). Its pathway is amino-acid biosynthesis; L-histidine biosynthesis; L-histidine from 5-phospho-alpha-D-ribose 1-diphosphate: step 5/9. In terms of biological role, IGPS catalyzes the conversion of PRFAR and glutamine to IGP, AICAR and glutamate. The HisF subunit catalyzes the cyclization activity that produces IGP and AICAR from PRFAR using the ammonia provided by the HisH subunit. The sequence is that of Imidazole glycerol phosphate synthase subunit HisF from Verminephrobacter eiseniae (strain EF01-2).